Consider the following 148-residue polypeptide: Endothelial differentiation-related factor 1 homolog (148 aa).

Residues 1–26 (MAESDWDTVTVLRKKGPSAAQAKSKQ) form a disordered region. Residues 81 to 135 (IQQGRQSKGMTQKDLATKINEKPQVIADYESGRAIPNNQVMGKIERAIGLKLRGK) form the HTH cro/C1-type domain. Residues 92 to 111 (QKDLATKINEKPQVIADYES) constitute a DNA-binding region (H-T-H motif).

Its subcellular location is the nucleus. Functionally, probable transcriptional coactivator. The chain is Endothelial differentiation-related factor 1 homolog (EDF1) from Gallus gallus (Chicken).